An 88-amino-acid polypeptide reads, in one-letter code: Stannin (88 aa).

The Mitochondrial intermembrane segment spans residues 1–10; the sequence is MSIMDHSPTT. The chain crosses the membrane as a helical span at residues 11–31; it reads GVVTVIVILIAIAALGALILG. At 32–88 the chain is on the cytoplasmic side; it reads CWCYLRLQRISQSEDEESIVGDGETKEPFLLVQYSAKGPCVERKAKLMTANSPEVHG. Ser49 and Ser83 each carry phosphoserine.

Belongs to the stannin family. In terms of assembly, monomer.

Its subcellular location is the mitochondrion outer membrane. Functionally, plays a role in the toxic effects of organotins. Plays a role in endosomal maturation. The polypeptide is Stannin (Snn) (Mus musculus (Mouse)).